Here is a 211-residue protein sequence, read N- to C-terminus: Ribosomal RNA small subunit methyltransferase G (211 aa).

S-adenosyl-L-methionine is bound by residues Gly73, Phe78, and Arg141.

This sequence belongs to the methyltransferase superfamily. RNA methyltransferase RsmG family.

It localises to the cytoplasm. It catalyses the reaction guanosine(527) in 16S rRNA + S-adenosyl-L-methionine = N(7)-methylguanosine(527) in 16S rRNA + S-adenosyl-L-homocysteine. Specifically methylates the N7 position of guanine in position 527 of 16S rRNA. This is Ribosomal RNA small subunit methyltransferase G from Jannaschia sp. (strain CCS1).